Consider the following 582-residue polypeptide: Arginine--tRNA ligase (582 aa).

The 'HIGH' region signature appears at 128–138; it reads PNLAKEMHVGH.

This sequence belongs to the class-I aminoacyl-tRNA synthetase family. As to quaternary structure, monomer.

The protein localises to the cytoplasm. It catalyses the reaction tRNA(Arg) + L-arginine + ATP = L-arginyl-tRNA(Arg) + AMP + diphosphate. This chain is Arginine--tRNA ligase, found in Colwellia psychrerythraea (strain 34H / ATCC BAA-681) (Vibrio psychroerythus).